Consider the following 39-residue polypeptide: Photosystem II reaction center protein L (39 aa).

Residues 18–38 (SLYLGLLLVAVLGILFSSYFF) traverse the membrane as a helical segment.

Belongs to the PsbL family. PSII is composed of 1 copy each of membrane proteins PsbA, PsbB, PsbC, PsbD, PsbE, PsbF, PsbH, PsbI, PsbJ, PsbK, PsbL, PsbM, PsbT, PsbX, PsbY, PsbZ, Psb30/Ycf12, peripheral proteins PsbO, CyanoQ (PsbQ), PsbU, PsbV and a large number of cofactors. It forms dimeric complexes.

The protein resides in the cellular thylakoid membrane. In terms of biological role, one of the components of the core complex of photosystem II (PSII). PSII is a light-driven water:plastoquinone oxidoreductase that uses light energy to abstract electrons from H(2)O, generating O(2) and a proton gradient subsequently used for ATP formation. It consists of a core antenna complex that captures photons, and an electron transfer chain that converts photonic excitation into a charge separation. This subunit is found at the monomer-monomer interface and is required for correct PSII assembly and/or dimerization. The chain is Photosystem II reaction center protein L from Rippkaea orientalis (strain PCC 8801 / RF-1) (Cyanothece sp. (strain PCC 8801)).